The following is a 570-amino-acid chain: Proline--tRNA ligase (570 aa).

Belongs to the class-II aminoacyl-tRNA synthetase family. ProS type 1 subfamily. In terms of assembly, homodimer.

It localises to the cytoplasm. The catalysed reaction is tRNA(Pro) + L-proline + ATP = L-prolyl-tRNA(Pro) + AMP + diphosphate. Functionally, catalyzes the attachment of proline to tRNA(Pro) in a two-step reaction: proline is first activated by ATP to form Pro-AMP and then transferred to the acceptor end of tRNA(Pro). As ProRS can inadvertently accommodate and process non-cognate amino acids such as alanine and cysteine, to avoid such errors it has two additional distinct editing activities against alanine. One activity is designated as 'pretransfer' editing and involves the tRNA(Pro)-independent hydrolysis of activated Ala-AMP. The other activity is designated 'posttransfer' editing and involves deacylation of mischarged Ala-tRNA(Pro). The misacylated Cys-tRNA(Pro) is not edited by ProRS. This chain is Proline--tRNA ligase, found in Clostridium perfringens (strain ATCC 13124 / DSM 756 / JCM 1290 / NCIMB 6125 / NCTC 8237 / Type A).